The sequence spans 1050 residues: Ankyrin repeat domain-containing protein 27 (1050 aa).

The interval Met1–Pro372 is sufficient for GEF activity towards RAB21. Positions Ala233 to Pro371 constitute a VPS9 domain. 6 ANK repeats span residues Ser396–Thr426, Arg462–Ala491, His495–Val524, Asn528–Ile560, Lys564–Ile593, and Leu597–Ser627. A sufficient for interaction with VPS29 region spans residues Ser396 to Asp460. The interval Pro451 to Thr600 is interaction with RAB38. Positions Pro451 to Val730 are interaction with RAB32. Residues Gln625 to Lys665 form a disordered region. Positions Ser628–Arg637 are enriched in polar residues. A compositionally biased stretch (low complexity) spans Ser638 to Ser658. The required for interaction with VAMP7 stretch occupies residues Ser658–Asp707. 5 ANK repeats span residues Arg668–Asp698, Asp743–Ala772, Asp776–Lys805, Ser809–Ala838, and Lys842–Val871. Positions Thr692–Ser746 are sufficient for interaction with VPS29. Residues Ser962 and Ser970 each carry the phosphoserine modification. Residues Pro987–Ser1050 form a disordered region. Basic and acidic residues predominate over residues Ala994–Glu1004. Thr1023 is modified (phosphothreonine). Residues Ser1040–Ser1050 are compositionally biased toward polar residues.

As to quaternary structure, interacts with RAB21 (GDP-bound form), VPS29, RAB32 (GTP-bound form), RAB38 (GTP-bound form), VAMP7, KIF5A, KIF5C, GOLGA4. Interacts with low affinity with RAB5. ANKRD27:RAB32 heterodimers can homodimerize to form tetramers. Can interact with RAB38 or RAB32, VPS29 and VAMP7 simultaneously. A decreased interaction with RAB32 seen in the presence of SGSM2.

The protein localises to the early endosome. It localises to the late endosome. It is found in the cytoplasmic vesicle membrane. The protein resides in the lysosome. Its subcellular location is the cell membrane. The protein localises to the melanosome. In terms of biological role, may be a guanine exchange factor (GEF) for Rab21, Rab32 and Rab38 and regulate endosome dynamics. May regulate the participation of VAMP7 in membrane fusion events; in vitro inhibits VAMP7-mediated SNARE complex formation by trapping VAMP7 in a closed, fusogenically inactive conformation. Involved in peripheral melanosomal distribution of TYRP1 in melanocytes; the function, which probably is implicating vesicle-trafficking, includes cooperation with Rab32, Rab38 and VAMP7. Involved in the regulation of neurite growth; the function seems to require its GEF activity, probably towards Rab21, and VAMP7 but not Rab32/38. Proposed to be involved in Golgi sorting of VAMP7 and transport of VAMP7 vesicles to the cell surface; the function seems to implicate kinesin heavy chain isoform 5 proteins, GOLGA4, RAB21 and MACF1. Required for the colocalization of VAMP7 and Rab21, probably on TGN sites. Involved in GLUT1 endosome-to-plasma membrane trafficking; the function is dependent of association with VPS29. Regulates the proper trafficking of melanogenic enzymes TYR, TYRP1 and DCT/TYRP2 to melanosomes in melanocytes. This chain is Ankyrin repeat domain-containing protein 27 (ANKRD27), found in Homo sapiens (Human).